The primary structure comprises 80 residues: D-alanyl carrier protein (80 aa).

Positions 1–77 constitute a Carrier domain; sequence MDIQKQIVDI…KLVEQVKKLQ (77 aa). Serine 35 is subject to O-(pantetheine 4'-phosphoryl)serine.

It belongs to the DltC family. 4'-phosphopantetheine is transferred from CoA to a specific serine of apo-DCP.

Its subcellular location is the cytoplasm. It functions in the pathway cell wall biogenesis; lipoteichoic acid biosynthesis. Its function is as follows. Carrier protein involved in the D-alanylation of lipoteichoic acid (LTA). The loading of thioester-linked D-alanine onto DltC is catalyzed by D-alanine--D-alanyl carrier protein ligase DltA. The DltC-carried D-alanyl group is further transferred to cell membrane phosphatidylglycerol (PG) by forming an ester bond, probably catalyzed by DltD. D-alanylation of LTA plays an important role in modulating the properties of the cell wall in Gram-positive bacteria, influencing the net charge of the cell wall. The sequence is that of D-alanyl carrier protein from Lactobacillus delbrueckii subsp. bulgaricus (strain ATCC 11842 / DSM 20081 / BCRC 10696 / JCM 1002 / NBRC 13953 / NCIMB 11778 / NCTC 12712 / WDCM 00102 / Lb 14).